The chain runs to 87 residues: Down syndrome critical region protein 10 (87 aa).

In terms of tissue distribution, expressed in placenta and testis.

In Homo sapiens (Human), this protein is Down syndrome critical region protein 10 (DSCR10).